A 279-amino-acid chain; its full sequence is Urease accessory protein UreD (279 aa).

It belongs to the UreD family. UreD, UreF and UreG form a complex that acts as a GTP-hydrolysis-dependent molecular chaperone, activating the urease apoprotein by helping to assemble the nickel containing metallocenter of UreC. The UreE protein probably delivers the nickel.

The protein localises to the cytoplasm. Its function is as follows. Required for maturation of urease via the functional incorporation of the urease nickel metallocenter. In Nostoc sp. (strain PCC 7120 / SAG 25.82 / UTEX 2576), this protein is Urease accessory protein UreD.